We begin with the raw amino-acid sequence, 787 residues long: Bifunctional dethiobiotin synthetase/adenosylmethionine-8-amino-7-oxononanoate aminotransferase (787 aa).

23-28 is an ATP binding site; it reads DVGKTI. Threonine 27 provides a ligand contact to Mg(2+). A substrate-binding site is contributed by threonine 54. Mg(2+) contacts are provided by aspartate 61 and glutamate 123. ATP contacts are provided by residues 123-126 and 184-185; these read ETAG and KD. 323–324 lines the (8S)-8-amino-7-oxononanoate pocket; the sequence is WW. 384–385 contacts pyridoxal 5'-phosphate; it reads GS. Tyrosine 421 serves as a coordination point for (8S)-8-amino-7-oxononanoate. Pyridoxal 5'-phosphate is bound at residue aspartate 582. (8S)-8-amino-7-oxononanoate contacts are provided by lysine 611 and glycine 645. 646 to 647 provides a ligand contact to pyridoxal 5'-phosphate; sequence HS. Arginine 756 provides a ligand contact to (8S)-8-amino-7-oxononanoate.

This sequence in the N-terminal section; belongs to the dethiobiotin synthetase family. It in the C-terminal section; belongs to the class-III pyridoxal-phosphate-dependent aminotransferase family. BioA subfamily. Homodimer. Mg(2+) is required as a cofactor. It depends on pyridoxal 5'-phosphate as a cofactor.

The protein localises to the mitochondrion matrix. It catalyses the reaction (7R,8S)-7,8-diammoniononanoate + CO2 + ATP = (4R,5S)-dethiobiotin + ADP + phosphate + 3 H(+). The catalysed reaction is (8S)-8-amino-7-oxononanoate + S-adenosyl-L-methionine = S-adenosyl-4-methylsulfanyl-2-oxobutanoate + (7R,8S)-7,8-diammoniononanoate. It functions in the pathway cofactor biosynthesis; biotin biosynthesis; biotin from 7,8-diaminononanoate: step 1/2. It participates in cofactor biosynthesis; biotin biosynthesis; 7,8-diaminononanoate from 8-amino-7-oxononanoate (SAM route): step 1/1. Functionally, bifunctional enzyme; part of the cluster involved in the biosynthesis of biotin (also known as vitamin B8 or vitamin H), a water-soluble vitamin that functions as a prosthetic group of many carboxylases, such as acetyl-CoA carboxylase and pyruvate carboxylase. Catalyzes a mechanistically unusual reaction, the ATP-dependent insertion of CO2 between the N7 and N8 nitrogen atoms of 7,8-diaminopelargonic acid (DAPA) to form an ureido ring. Also catalyzes the transfer of the alpha-amino group from S-adenosyl-L-methionine (SAM) to 7-keto-8-aminopelargonic acid (KAPA) to form 7,8-diaminopelargonic acid (DAPA). It is the only animotransferase known to utilize SAM as an amino donor. The polypeptide is Bifunctional dethiobiotin synthetase/adenosylmethionine-8-amino-7-oxononanoate aminotransferase (Emericella nidulans (strain FGSC A4 / ATCC 38163 / CBS 112.46 / NRRL 194 / M139) (Aspergillus nidulans)).